We begin with the raw amino-acid sequence, 105 residues long: DNA-directed RNA polymerases I and III subunit RPAC2 (105 aa).

Belongs to the archaeal Rpo11/eukaryotic RPB11/RPC19 RNA polymerase subunit family. In terms of assembly, component of the RNA polymerase I (Pol I) and RNA polymerase III (Pol III) complexes consisting of at least 13 and 17 subunits, respectively.

The protein localises to the nucleus. Functionally, DNA-dependent RNA polymerase catalyzes the transcription of DNA into RNA using the four ribonucleoside triphosphates as substrates. Common core component of RNA polymerases I and III which synthesize ribosomal RNA precursors and small RNAs, such as 5S rRNA and tRNAs, respectively. The polypeptide is DNA-directed RNA polymerases I and III subunit RPAC2 (Drosophila melanogaster (Fruit fly)).